The following is a 143-amino-acid chain: MAKKIIGYIKLQIPAGKANPSPPVGPALGQRQLNIMEFCKAFNAATQKMEPGLPVPVVITAYADKSFTFVLKTTPASVLIKKLAGLSKGSAQPHVDKVGKLTRSQVEEIAKIKMEDLTAADMDAAIRTIAGSARSMGVEVEGV.

This sequence belongs to the universal ribosomal protein uL11 family. In terms of assembly, part of the ribosomal stalk of the 50S ribosomal subunit. Interacts with L10 and the large rRNA to form the base of the stalk. L10 forms an elongated spine to which L12 dimers bind in a sequential fashion forming a multimeric L10(L12)X complex. Post-translationally, one or more lysine residues are methylated.

Its function is as follows. Forms part of the ribosomal stalk which helps the ribosome interact with GTP-bound translation factors. The sequence is that of Large ribosomal subunit protein uL11 from Nitrosomonas eutropha (strain DSM 101675 / C91 / Nm57).